Here is a 309-residue protein sequence, read N- to C-terminus: NAD kinase (309 aa).

The active-site Proton acceptor is the D89. Residues 89–90 (DG), 163–164 (NE), H174, R191, D193, and 204–209 (TAYALS) each bind NAD(+).

Belongs to the NAD kinase family. A divalent metal cation serves as cofactor.

The protein localises to the cytoplasm. It catalyses the reaction NAD(+) + ATP = ADP + NADP(+) + H(+). Its function is as follows. Involved in the regulation of the intracellular balance of NAD and NADP, and is a key enzyme in the biosynthesis of NADP. Catalyzes specifically the phosphorylation on 2'-hydroxyl of the adenosine moiety of NAD to yield NADP. The protein is NAD kinase of Shewanella sp. (strain ANA-3).